Reading from the N-terminus, the 319-residue chain is Malate dehydrogenase (319 aa).

Residues 10-15 and aspartate 34 each bind NAD(+); that span reads GAGNIG. Residues arginine 83 and arginine 89 each coordinate substrate. NAD(+)-binding positions include asparagine 96 and 119 to 121; that span reads ITN. Positions 121 and 152 each coordinate substrate. Histidine 176 acts as the Proton acceptor in catalysis.

The protein belongs to the LDH/MDH superfamily. MDH type 3 family.

The catalysed reaction is (S)-malate + NAD(+) = oxaloacetate + NADH + H(+). Catalyzes the reversible oxidation of malate to oxaloacetate. This chain is Malate dehydrogenase, found in Francisella tularensis subsp. holarctica (strain FTNF002-00 / FTA).